The following is a 231-amino-acid chain: Large ribosomal subunit protein uL1 (231 aa).

The protein belongs to the universal ribosomal protein uL1 family. As to quaternary structure, part of the 50S ribosomal subunit.

Functionally, binds directly to 23S rRNA. The L1 stalk is quite mobile in the ribosome, and is involved in E site tRNA release. Its function is as follows. Protein L1 is also a translational repressor protein, it controls the translation of the L11 operon by binding to its mRNA. In Mycoplasmopsis agalactiae (strain NCTC 10123 / CIP 59.7 / PG2) (Mycoplasma agalactiae), this protein is Large ribosomal subunit protein uL1.